A 1588-amino-acid chain; its full sequence is Autotransporter adhesin EhaG (1588 aa).

The signal sequence occupies residues 1–53 (MNKIFKVIWNPATGNYTVTSETAKSRGKKSGRSKLLISALVAGGMLSSFGALA). The segment at 54–1499 (NAGNDNGQGV…QETKQYTDQR (1446 aa)) is surface exposed passenger domain. The translocator domain stretch occupies residues 1500–1588 (MVEMDNKLSK…SAALGAGIQW (89 aa)). Transmembrane regions (beta stranded) follow at residues 1534 to 1544 (GASMASIGGGT), 1548 to 1558 (ESAVALGVSMV), 1567 to 1573 (KLQGSTN), and 1577 to 1588 (EYSAALGAGIQW).

Belongs to the autotransporter-2 (AT-2) (TC 1.B.40) family. In terms of assembly, homotrimer.

It localises to the cell surface. Its subcellular location is the cell outer membrane. Functionally, mediates aggregation, biofilm formation and adhesion to a range of extracellular matrix (ECM) proteins, such as fibronectin, fibrinogen, laminin and collagen types I, II, III, and V. Mediates adhesion to intestinal epithelial cells. The polypeptide is Autotransporter adhesin EhaG (Escherichia coli O157:H7).